We begin with the raw amino-acid sequence, 297 residues long: Formamidopyrimidine-DNA glycosylase (297 aa).

The active-site Schiff-base intermediate with DNA is the proline 2. The active-site Proton donor is glutamate 3. Lysine 58 serves as the catalytic Proton donor; for beta-elimination activity. DNA contacts are provided by histidine 104, arginine 127, and lysine 170. The FPG-type zinc finger occupies 261–297 (SVYDREGKPCRKEGCSGTIQRFVQGGRSTFYCPICQR). The active-site Proton donor; for delta-elimination activity is the arginine 287.

This sequence belongs to the FPG family. Monomer. It depends on Zn(2+) as a cofactor.

The enzyme catalyses Hydrolysis of DNA containing ring-opened 7-methylguanine residues, releasing 2,6-diamino-4-hydroxy-5-(N-methyl)formamidopyrimidine.. It carries out the reaction 2'-deoxyribonucleotide-(2'-deoxyribose 5'-phosphate)-2'-deoxyribonucleotide-DNA = a 3'-end 2'-deoxyribonucleotide-(2,3-dehydro-2,3-deoxyribose 5'-phosphate)-DNA + a 5'-end 5'-phospho-2'-deoxyribonucleoside-DNA + H(+). Functionally, involved in base excision repair of DNA damaged by oxidation or by mutagenic agents. Acts as a DNA glycosylase that recognizes and removes damaged bases. Has a preference for oxidized purines, such as 7,8-dihydro-8-oxoguanine (8-oxoG). Has AP (apurinic/apyrimidinic) lyase activity and introduces nicks in the DNA strand. Cleaves the DNA backbone by beta-delta elimination to generate a single-strand break at the site of the removed base with both 3'- and 5'-phosphates. In Chelativorans sp. (strain BNC1), this protein is Formamidopyrimidine-DNA glycosylase.